Here is a 699-residue protein sequence, read N- to C-terminus: SPX domain-containing membrane protein At4g22990 (699 aa).

Residues 2 to 145 (VAFGKKLKER…GYRFTNYYVK (144 aa)) form the SPX domain. 6 helical membrane passes run 249–269 (FMSL…TYII), 280–300 (LGAA…AQLF), 317–337 (LIFS…AFDF), 339–358 (SIAV…ARAV), 377–397 (AGFV…AGLL), and 413–433 (LPGW…AISF). Acidic residues predominate over residues 475–490 (IEEQGEDECDGSEEAS). The tract at residues 475–494 (IEEQGEDECDGSEEASEDSR) is disordered. A run of 5 helical transmembrane segments spans residues 515-535 (LLIY…SSVI), 546-566 (SVAI…LVVG), 578-598 (ILLV…HVVV), 606-626 (VCSG…NLSL), and 671-691 (MLLN…IVAT).

Belongs to the major facilitator superfamily.

It localises to the membrane. In Arabidopsis thaliana (Mouse-ear cress), this protein is SPX domain-containing membrane protein At4g22990.